The sequence spans 348 residues: Phosphoribosylformylglycinamidine cyclo-ligase (348 aa).

This sequence belongs to the AIR synthase family.

It localises to the cytoplasm. It catalyses the reaction 2-formamido-N(1)-(5-O-phospho-beta-D-ribosyl)acetamidine + ATP = 5-amino-1-(5-phospho-beta-D-ribosyl)imidazole + ADP + phosphate + H(+). It participates in purine metabolism; IMP biosynthesis via de novo pathway; 5-amino-1-(5-phospho-D-ribosyl)imidazole from N(2)-formyl-N(1)-(5-phospho-D-ribosyl)glycinamide: step 2/2. In Ruegeria pomeroyi (strain ATCC 700808 / DSM 15171 / DSS-3) (Silicibacter pomeroyi), this protein is Phosphoribosylformylglycinamidine cyclo-ligase.